The following is a 385-amino-acid chain: GDSL esterase/lipase 5 (385 aa).

Positions 1-35 (MRESTLMEKVTRRTISSFIFFIVSSTILFLAGKSS) are cleaved as a signal peptide. An N-linked (GlcNAc...) asparagine glycan is attached at Asn45. Ser55 (nucleophile) is an active-site residue. Asn66, Asn194, Asn211, and Asn289 each carry an N-linked (GlcNAc...) asparagine glycan. Residues Asp345 and His348 contribute to the active site.

It belongs to the 'GDSL' lipolytic enzyme family.

Its subcellular location is the secreted. In Arabidopsis thaliana (Mouse-ear cress), this protein is GDSL esterase/lipase 5 (GLIP5).